We begin with the raw amino-acid sequence, 354 residues long: MEKRIVCLAGDGVGPEVMESAKEVLHMVERLYGHHFHLQDEHFGGVAIDLTGQPLPQRTLAACLASDAVLLGAVGGPRWDGAKERPEKGLLALRKGLGVFANVRPVTVESETAHLSPLKKADEIDFVVVRELTGGIYFSYPKERTDEVATDTLTYHRHEIERIVSYAFQLASKRKKKVTSIDKANVLESSKLWRTVTEEVALRYPDVELEHILVDAAAMELIRNPGRFDVIVTENLFGDILSDEASVLAGSLGMLPSASHAEKGPSLYEPIHGSAPDIAGKNKANPIAMMRSVAMMLGQSFGLTREGCAIEEAISAVLKSGKCTEDIGGTETTTSFTKAVMQEMEEQALVGRGR.

Position 76-87 (76-87) interacts with NAD(+); that stretch reads GPRWDGAKERPE. Residues Arg-94, Arg-104, Arg-130, and Asp-215 each contribute to the substrate site. Mg(2+) contacts are provided by Asp-215, Asp-239, and Asp-243. 273-285 contacts NAD(+); it reads GSAPDIAGKNKAN.

Belongs to the isocitrate and isopropylmalate dehydrogenases family. LeuB type 1 subfamily. Homodimer. It depends on Mg(2+) as a cofactor. The cofactor is Mn(2+).

The protein localises to the cytoplasm. It catalyses the reaction (2R,3S)-3-isopropylmalate + NAD(+) = 4-methyl-2-oxopentanoate + CO2 + NADH. The protein operates within amino-acid biosynthesis; L-leucine biosynthesis; L-leucine from 3-methyl-2-oxobutanoate: step 3/4. Functionally, catalyzes the oxidation of 3-carboxy-2-hydroxy-4-methylpentanoate (3-isopropylmalate) to 3-carboxy-4-methyl-2-oxopentanoate. The product decarboxylates to 4-methyl-2 oxopentanoate. This chain is 3-isopropylmalate dehydrogenase, found in Bacillus cereus (strain ZK / E33L).